A 397-amino-acid polypeptide reads, in one-letter code: Phosphoglycerate kinase (397 aa).

Residues 21 to 23, Arg37, 60 to 63, Arg119, and Arg152 contribute to the substrate site; these read DFN and HLGR. Residues Lys203, Gly294, Glu325, and 354–357 contribute to the ATP site; that span reads GGDS.

This sequence belongs to the phosphoglycerate kinase family. As to quaternary structure, monomer.

Its subcellular location is the cytoplasm. It catalyses the reaction (2R)-3-phosphoglycerate + ATP = (2R)-3-phospho-glyceroyl phosphate + ADP. It participates in carbohydrate degradation; glycolysis; pyruvate from D-glyceraldehyde 3-phosphate: step 2/5. In Chlorobium luteolum (strain DSM 273 / BCRC 81028 / 2530) (Pelodictyon luteolum), this protein is Phosphoglycerate kinase.